A 367-amino-acid polypeptide reads, in one-letter code: Dual specificity protein phosphatase 1 (367 aa).

A Rhodanese domain is found at 20 to 137 (RAAQCLLLDC…FSASCPELCS (118 aa)). One can recognise a Tyrosine-protein phosphatase domain in the interval 173–314 (GPVEILPFLY…LLQFESQVLA (142 aa)). The Phosphocysteine intermediate role is filled by Cys-258. 2 positions are modified to phosphoserine; by MAPK1 and MAPK3: Ser-359 and Ser-364.

This sequence belongs to the protein-tyrosine phosphatase family. Non-receptor class dual specificity subfamily. In terms of processing, phosphorylation at Ser-359 and Ser-364 by MAPK1/ERK2 and MAPK3/ERK1 reduces its rate of degradation. 'Lys-48'-linked polyubiquitinated by NEURL3, leading to proteasomal degradation. As to expression, expressed at high levels in the lung, liver placenta and pancreas. Moderate levels seen in the heart and skeletal muscle. Lower levels found in the brain and kidney.

The protein resides in the nucleus. The catalysed reaction is O-phospho-L-tyrosyl-[protein] + H2O = L-tyrosyl-[protein] + phosphate. It catalyses the reaction O-phospho-L-seryl-[protein] + H2O = L-seryl-[protein] + phosphate. It carries out the reaction O-phospho-L-threonyl-[protein] + H2O = L-threonyl-[protein] + phosphate. In terms of biological role, dual specificity phosphatase that dephosphorylates MAP kinase MAPK1/ERK2 on both 'Thr-183' and 'Tyr-185', regulating its activity during the meiotic cell cycle. The polypeptide is Dual specificity protein phosphatase 1 (Homo sapiens (Human)).